A 332-amino-acid chain; its full sequence is Ribonucleoside-diphosphate reductase small chain C (332 aa).

Residues Asp76, Glu107, and His110 each contribute to the Fe cation site. The active site involves Tyr114. The Fe cation site is built by Glu169, Glu203, and His206.

Belongs to the ribonucleoside diphosphate reductase small chain family. Homodimer and heterodimer with RNR2A. Heterotetramer of two R1 and two R2 chains. Interacts with CSN7 (via C-terminal tail). Fe cation serves as cofactor. In terms of tissue distribution, expressed in roots, cauline and rosette leaves, stems and flowers.

It is found in the cytoplasm. It localises to the nucleus. It carries out the reaction a 2'-deoxyribonucleoside 5'-diphosphate + [thioredoxin]-disulfide + H2O = a ribonucleoside 5'-diphosphate + [thioredoxin]-dithiol. Provides the precursors necessary for DNA synthesis. Catalyzes the biosynthesis of deoxyribonucleotides from the corresponding ribonucleotides. Involved in DNA damage repair and programmed cell death inhibition. The sequence is that of Ribonucleoside-diphosphate reductase small chain C (TSO2) from Arabidopsis thaliana (Mouse-ear cress).